The following is a 492-amino-acid chain: Dipeptide and tripeptide permease A (492 aa).

At 1-20 (MSTANKHPEAASLNAFKQPR) the chain is on the cytoplasmic side. The chain crosses the membrane as a helical span at residues 21–43 (SFYLIFSIELWERFGYYGLQGIM). Over 44 to 58 (AVYLVKMLGMSEAQS) the chain is Periplasmic. A helical transmembrane segment spans residues 59–79 (ITLFASFSALVYGLIAVGGWL). The Cytoplasmic portion of the chain corresponds to 80-88 (GDKVLGTKR). The helical transmembrane segment at 89–109 (VIVLGTLVLALGYALVAWSGH) threads the bilayer. Residue Asp110 is a topological domain, periplasmic. A helical membrane pass occupies residues 111–131 (IAMIYFGMATIAVGNGLFKAN). The Cytoplasmic portion of the chain corresponds to 132–152 (PSSLLSTCYEKDDPRLDGAFT). A helical transmembrane segment spans residues 153–173 (MYYMAINIGSFFSMLATPWLA). Residues 174–178 (AQFGW) are Periplasmic-facing. The chain crosses the membrane as a helical span at residues 179-199 (STAFGLSFVGMLITLVNFMFF). The Cytoplasmic portion of the chain corresponds to 200-217 (RKWVKDHGSKPDFAPLNM). Residues 218 to 238 (GKLLVTLLGIAVMIAAATWLL) traverse the membrane as a helical segment. Residues 239 to 245 (HNQDIAR) are Periplasmic-facing. Residues 246 to 266 (MVLGAVAVAIVVIFTKEALTL) traverse the membrane as a helical segment. At 267–273 (KGAARRK) the chain is on the cytoplasmic side. Residues 274–294 (MIVAFLLMLEAIVFFVLYMQM) traverse the membrane as a helical segment. The Periplasmic portion of the chain corresponds to 295-319 (PTSLNFFAIRNVEHSLLGIAFQPEQ). A helical transmembrane segment spans residues 320–340 (FQALNPFWIMIFSPLLAALYN). Residues 341 to 351 (KLGDRMPMPHK) are Cytoplasmic-facing. Residues 352-372 (FALGMVLCSAAFLVLPLGASL) form a helical membrane-spanning segment. Residues 373–377 (ANKMG) lie on the Periplasmic side of the membrane. The helical transmembrane segment at 378 to 398 (IVSVGWLVLSYALQSVGELMI) threads the bilayer. The Cytoplasmic segment spans residues 399 to 413 (SGLGLAMVAQLVPQR). Residues 414–434 (LMGFIMGSWFLTTAGAAMVAG) traverse the membrane as a helical segment. Residues 435-458 (KVANLMAVPENITNPLLSLHVYGD) lie on the Periplasmic side of the membrane. A helical transmembrane segment spans residues 459–479 (IFFKIGITTGVIAVLMILAAP). At 480 to 492 (LLNRMTQDEQPGV) the chain is on the cytoplasmic side.

Belongs to the major facilitator superfamily. Proton-dependent oligopeptide transporter (POT/PTR) (TC 2.A.17) family. DtpA subfamily.

The protein resides in the cell inner membrane. In terms of biological role, proton-dependent permease that transports di- and tripeptides. The polypeptide is Dipeptide and tripeptide permease A (Erwinia pyrifoliae (strain DSM 12163 / CIP 106111 / Ep16/96)).